Here is a 165-residue protein sequence, read N- to C-terminus: Disulfide bond formation protein B (165 aa).

Topologically, residues 1–11 (MICSKVPVRAW) are cytoplasmic. Residues 12 to 28 (FATLGLGCLGLVAVGMA) traverse the membrane as a helical segment. The Periplasmic segment spans residues 29–46 (LQTLLHLAPCPLCIFQRL). A disulfide bridge connects residues C38 and C41. A helical membrane pass occupies residues 47-61 (LYIMIGFVGLLGFVL). The Cytoplasmic segment spans residues 62–66 (PAGRL). The helical transmembrane segment at 67–84 (LWSTLAAGLGVLGFGVAA) threads the bilayer. At 85–142 (YQTWMQAFPDLAPECGFTDPNAIERLVDWLGMEWPSMFLATGFCTSRDWELLGLSMAN) the chain is on the periplasmic side. C99 and C128 are disulfide-bonded. The chain crosses the membrane as a helical span at residues 143-161 (WSVLIFAGIVAYAVLLFVR). The Cytoplasmic portion of the chain corresponds to 162–165 (KDRA).

The protein belongs to the DsbB family.

It localises to the cell inner membrane. Functionally, required for disulfide bond formation in some periplasmic proteins. Acts by oxidizing the DsbA protein. This chain is Disulfide bond formation protein B, found in Dechloromonas aromatica (strain RCB).